Here is a 751-residue protein sequence, read N- to C-terminus: Catalase-peroxidase (751 aa).

An N-terminal signal peptide occupies residues 1–12; that stretch reads MSNETKCPFSHA. A cross-link (tryptophyl-tyrosyl-methioninium (Trp-Tyr) (with M-267)) is located at residues 91 to 241; it reads WHSAGTYRIG…LAAVQMGLIY (151 aa). H92 functions as the Proton acceptor in the catalytic mechanism. The tryptophyl-tyrosyl-methioninium (Tyr-Met) (with W-91) cross-link spans 241–267; that stretch reads YVNPEGPDGNPDPLAAAHDIRESFGRM. H282 is a heme b binding site.

It belongs to the peroxidase family. Peroxidase/catalase subfamily. In terms of assembly, homodimer or homotetramer. The cofactor is heme b. Post-translationally, formation of the three residue Trp-Tyr-Met cross-link is important for the catalase, but not the peroxidase activity of the enzyme.

It carries out the reaction H2O2 + AH2 = A + 2 H2O. The enzyme catalyses 2 H2O2 = O2 + 2 H2O. Its function is as follows. Bifunctional enzyme with both catalase and broad-spectrum peroxidase activity. This is Catalase-peroxidase from Cupriavidus necator (strain ATCC 17699 / DSM 428 / KCTC 22496 / NCIMB 10442 / H16 / Stanier 337) (Ralstonia eutropha).